We begin with the raw amino-acid sequence, 315 residues long: Small ribosomal subunit biogenesis GTPase RsgA (315 aa).

Residues leucine 79–phenylalanine 243 enclose the CP-type G domain. Residues asparagine 128–aspartate 131 and glycine 182–serine 190 each bind GTP. The Zn(2+) site is built by cysteine 267, cysteine 272, histidine 274, and cysteine 280.

The protein belongs to the TRAFAC class YlqF/YawG GTPase family. RsgA subfamily. In terms of assembly, monomer. Associates with 30S ribosomal subunit, binds 16S rRNA. The cofactor is Zn(2+).

The protein localises to the cytoplasm. One of several proteins that assist in the late maturation steps of the functional core of the 30S ribosomal subunit. Helps release RbfA from mature subunits. May play a role in the assembly of ribosomal proteins into the subunit. Circularly permuted GTPase that catalyzes slow GTP hydrolysis, GTPase activity is stimulated by the 30S ribosomal subunit. The chain is Small ribosomal subunit biogenesis GTPase RsgA from Porphyromonas gingivalis (strain ATCC BAA-308 / W83).